We begin with the raw amino-acid sequence, 223 residues long: Deoxyribose-phosphate aldolase (223 aa).

The active-site Proton donor/acceptor is the Asp-92. Residue Lys-154 is the Schiff-base intermediate with acetaldehyde of the active site. The active-site Proton donor/acceptor is the Lys-182.

This sequence belongs to the DeoC/FbaB aldolase family. DeoC type 1 subfamily.

It localises to the cytoplasm. It carries out the reaction 2-deoxy-D-ribose 5-phosphate = D-glyceraldehyde 3-phosphate + acetaldehyde. The protein operates within carbohydrate degradation; 2-deoxy-D-ribose 1-phosphate degradation; D-glyceraldehyde 3-phosphate and acetaldehyde from 2-deoxy-alpha-D-ribose 1-phosphate: step 2/2. Its function is as follows. Catalyzes a reversible aldol reaction between acetaldehyde and D-glyceraldehyde 3-phosphate to generate 2-deoxy-D-ribose 5-phosphate. The chain is Deoxyribose-phosphate aldolase from Pasteurella multocida (strain Pm70).